A 351-amino-acid polypeptide reads, in one-letter code: Dysbindin (351 aa).

The residue at position 11 (Ser11) is a Phosphoserine. Positions 88-181 (EKKKTSLVEL…ELDAEHAQKV (94 aa)) form a coiled coil. The dysbindin stretch occupies residues 173–331 (LDAEHAQKVL…DEEEVQVDTA (159 aa)). The Nuclear export signal signature appears at 243-256 (LMDISDQEALDVFL). The interval 286-351 (PNPSELRAKP…TPDGGEDSDS (66 aa)) is disordered. Residues 296–305 (PSSSSTCTDS) are compositionally biased toward polar residues. Phosphoserine occurs at positions 316, 321, and 349.

Belongs to the dysbindin family. As to quaternary structure, interacts (via its coiled coil domain) with KXD1. Interacts with CMYA5, PI4K2 and RNF151. Component of the biogenesis of lysosome-related organelles complex 1 (BLOC-1) composed of at least BLOC1S1, BLOC1S2, BLOC1S3, BLOC1S4, BLOC1S5, BLOC1S6, DTNBP1/BLOC1S7 and SNAPIN/BLOC1S8. Interacts directly in the complex with BLOC1S5, BLOC1S6 and SNAPIN/BLOC1S8. The BLOC-1 complex associates with the AP-3 protein complex and membrane protein cargos. This BLOC-1 complex also associates with the BLOC-2 complex in endosomes. Binds to DTNA and DTNB but may not be a physiological binding partner. Interacts (isoform 1 and isoform 2 only) with the DNA-dependent protein kinase complex DNA-PK; the interaction phosphorylates DTNBP1 in vitro. Interacts directly in this complex with XRCC5 and XRCC6. Interacts with AP3M1, AP3B2 and TRIM32. Interacts with XPO1; the interaction exports DTNBP1 out of the nucleus. In terms of processing, ubiquitinated by TRIM32. Ubiquitination leads to DTNBP1 degradation. Post-translationally, isoforms 1 and 2 highly phosphorylated by PRKDC in vitro. Isoform 3 only weakly phosphorylated by PRKDC in vitro. Detected in brain, in neurons and in neuropil. Isoform 1 is expressed in the cerebral cortex, and hippocampal frontal (HF). Specific expression in the posterior half of the superior temporal gyrus (pSTG). Higher expression of isoform 2 and 3 in the HF than in the pSTG while isoform 1 shows no difference in expression in these areas. In the HF, detected in dentate gyrus (DG) and in pyramidal cells of hippocampus CA2 and CA3 (at protein level). Expressed in all principal neuronal populations of the HF, namely pyramidal neurons in the subiculum and CA1-3, granule cells in the dense cell layer of the DG (DGg), and polymorph cells in the hilus of the DG (DGh). Maximal levels in CA2, CA3, and DGh. Isoform 2 not expressed in the cerebral cortex.

It is found in the cytoplasm. Its subcellular location is the cytoplasmic vesicle membrane. The protein resides in the endosome membrane. The protein localises to the melanosome membrane. It localises to the postsynaptic density. It is found in the endoplasmic reticulum. Its subcellular location is the nucleus. The protein resides in the cytoplasmic vesicle. The protein localises to the secretory vesicle. It localises to the synaptic vesicle membrane. It is found in the postsynaptic cell membrane. Component of the BLOC-1 complex, a complex that is required for normal biogenesis of lysosome-related organelles (LRO), such as platelet dense granules and melanosomes. In concert with the AP-3 complex, the BLOC-1 complex is required to target membrane protein cargos into vesicles assembled at cell bodies for delivery into neurites and nerve terminals. The BLOC-1 complex, in association with SNARE proteins, is also proposed to be involved in neurite extension. Associates with the BLOC-2 complex to facilitate the transport of TYRP1 independent of AP-3 function. Plays a role in synaptic vesicle trafficking and in neurotransmitter release. Plays a role in the regulation of cell surface exposure of DRD2. May play a role in actin cytoskeleton reorganization and neurite outgrowth. May modulate MAPK8 phosphorylation. Appears to promote neuronal transmission and viability through regulating the expression of SNAP25 and SYN1, modulating PI3-kinase-Akt signaling and influencing glutamatergic release. Regulates the expression of SYN1 through binding to its promoter. Modulates prefrontal cortical activity via the dopamine/D2 pathway. The polypeptide is Dysbindin (DTNBP1) (Homo sapiens (Human)).